A 628-amino-acid chain; its full sequence is Putative ankyrin repeat protein L769 (628 aa).

ANK repeat units follow at residues 217-246 (NYMDILKQACFFGSTEIINYVLNKGIEYDF), 333-362 (DLDEIMIEALRYNFTELIDWCINNGSDINR), 421-451 (TAENIIHNIIENRPHIQVLKYLLSEITNHDL), and 512-542 (NNLKILFVTMMSNNIDMLEFLLEINNYDQDY).

In Acanthamoeba polyphaga mimivirus (APMV), this protein is Putative ankyrin repeat protein L769.